Reading from the N-terminus, the 414-residue chain is tRNA N6-adenosine threonylcarbamoyltransferase, mitochondrial (414 aa).

The transit peptide at 1–29 directs the protein to the mitochondrion; the sequence is MLILTKTAGVFFKPSKRKVYEFLRSFNFH. Residues Lys74 and Lys140 each carry the N6-acetyllysine modification. Residues His147 and His151 each contribute to the a divalent metal cation site. Substrate-binding positions include 169–173 and Asp202; that span reads LISGG. At Lys203 the chain carries N6-acetyllysine. Substrate-binding residues include Gly222 and Glu226. N6-acetyllysine is present on residues Lys230, Lys240, and Lys299. Substrate-binding positions include 329-330 and Thr357; that span reads SN. Asp358 is a binding site for a divalent metal cation.

Belongs to the KAE1 / TsaD family. Monomer. A divalent metal cation serves as cofactor. As to expression, widely expressed, with maximum expression in pituitary gland, prostate, rectum and uterus.

It is found in the mitochondrion. The enzyme catalyses L-threonylcarbamoyladenylate + adenosine(37) in tRNA = N(6)-L-threonylcarbamoyladenosine(37) in tRNA + AMP + H(+). Required for the formation of a threonylcarbamoyl group on adenosine at position 37 (t(6)A37) in mitochondrial tRNAs that read codons beginning with adenine. Probably involved in the transfer of the threonylcarbamoyl moiety of threonylcarbamoyl-AMP (TC-AMP) to the N6 group of A37. Involved in mitochondrial genome maintenance. The sequence is that of tRNA N6-adenosine threonylcarbamoyltransferase, mitochondrial from Homo sapiens (Human).